A 212-amino-acid chain; its full sequence is ER lumen protein-retaining receptor 1 (212 aa).

The Lumenal portion of the chain corresponds to 1–4 (MNLF). Residues 5-24 (RFLGDLSHLLAIILLLLKIW) form a helical membrane-spanning segment. Over 25-32 (KSRSCAGI) the chain is Cytoplasmic. A helical membrane pass occupies residues 33 to 52 (SGKSQVLFAVVFTARYLDLF). Positions 47-48 (RY) are interaction with the K-D-E-L motif on target proteins. Topologically, residues 53 to 58 (TNYISL) are lumenal. The chain crosses the membrane as a helical span at residues 59–79 (YNTCMKVVYIACSFTTVWMIY). Topologically, residues 80–92 (SKFKATYDGNHDT) are cytoplasmic. Residues 93–110 (FRVEFLVIPTAILAFLVN) form a helical membrane-spanning segment. The Lumenal portion of the chain corresponds to 111 to 116 (HDFTPL). The chain crosses the membrane as a helical span at residues 117 to 135 (EILWTFSIYLESVAILPQL). The Cytoplasmic portion of the chain corresponds to 136–149 (FMVSKTGEAETITS). Residues 150-168 (HYLFALGVYRTLYLFNWIW) form a helical membrane-spanning segment. An interaction with the K-D-E-L motif on target proteins region spans residues 159-169 (RTLYLFNWIWR). The Lumenal segment spans residues 169–178 (RYHFEGFFDL). A helical membrane pass occupies residues 179-199 (IAIVAGLVQTVLYCDFFYLYI). Topologically, residues 200 to 212 (TKVLKGKKLSLPA) are cytoplasmic. Residues 204–207 (KGKK) form an important for recycling of cargo proteins with the sequence motif K-D-E-L from the Golgi to the endoplasmic reticulum region. At serine 209 the chain carries Phosphoserine; by PKA.

This sequence belongs to the ERD2 family. As to quaternary structure, upon ligand binding the receptor oligomerizes and interacts with components of the transport machinery such as ARFGAP1 and ARF1. In terms of processing, phosphorylation by PKA at Ser-209 is required for endoplasmic reticulum retention function.

It localises to the golgi apparatus membrane. The protein resides in the cytoplasmic vesicle. It is found in the COPI-coated vesicle membrane. Its subcellular location is the endoplasmic reticulum membrane. The protein localises to the endoplasmic reticulum-Golgi intermediate compartment membrane. Its function is as follows. Receptor for the C-terminal sequence motif K-D-E-L that is present on endoplasmic reticulum resident proteins and that mediates their recycling from the Golgi back to the endoplasmic reticulum. The sequence is that of ER lumen protein-retaining receptor 1 (KDELR1) from Bos taurus (Bovine).